The sequence spans 512 residues: HMG box-containing protein 1 (512 aa).

Residues 151-180 (RPPPVASSKGEPAFPHHWKEQTPVRHERAN) form a disordered region. Positions 167 to 180 (HWKEQTPVRHERAN) are enriched in basic and acidic residues. The AXH domain maps to 201–343 (WCNSWPSTAW…PPGHPDAINF (143 aa)). Residues 432-500 (CKRPMNAFML…EQKRLNPDCW (69 aa)) constitute a DNA-binding region (HMG box).

Binds TCF4. Binds RB1. Binds the second PAH repeat of SIN3A. Ubiquitinated by the CTLH E3 ubiquitin-protein ligase complex, leading to subsequent proteasomal degradation.

It is found in the nucleus. Functionally, transcriptional repressor that binds to the promoter region of target genes. Plays a role in the regulation of the cell cycle and of the Wnt pathway. Binds preferentially to the sequence 5'-TTCATTCATTCA-3'. Binding to the histone H1.0 promoter is enhanced by interaction with RB1. Disrupts the interaction between DNA and TCF4. The sequence is that of HMG box-containing protein 1 (HBP1) from Bos taurus (Bovine).